The primary structure comprises 224 residues: 7-cyano-7-deazaguanine synthase (224 aa).

12-22 (MSGGMDSTLGA) contributes to the ATP binding site. Residues C191, C199, C202, and C205 each contribute to the Zn(2+) site.

It belongs to the QueC family. Zn(2+) is required as a cofactor.

It carries out the reaction 7-carboxy-7-deazaguanine + NH4(+) + ATP = 7-cyano-7-deazaguanine + ADP + phosphate + H2O + H(+). Its pathway is purine metabolism; 7-cyano-7-deazaguanine biosynthesis. Functionally, catalyzes the ATP-dependent conversion of 7-carboxy-7-deazaguanine (CDG) to 7-cyano-7-deazaguanine (preQ(0)). This Sulfurimonas denitrificans (strain ATCC 33889 / DSM 1251) (Thiomicrospira denitrificans (strain ATCC 33889 / DSM 1251)) protein is 7-cyano-7-deazaguanine synthase.